We begin with the raw amino-acid sequence, 83 residues long: uncharacterized protein (83 aa).

A helical transmembrane segment spans residues Tyr58–Leu80.

The protein localises to the membrane. This is an uncharacterized protein from Bacillus subtilis (strain 168).